A 506-amino-acid chain; its full sequence is Ribose import ATP-binding protein RbsA 2 (506 aa).

ABC transporter domains are found at residues 5 to 241 and 251 to 498; these read LRLS…VGRR and VRAA…TAGT. 37–44 serves as a coordination point for ATP; that stretch reads GENGAGKS.

This sequence belongs to the ABC transporter superfamily. Ribose importer (TC 3.A.1.2.1) family. As to quaternary structure, the complex is composed of an ATP-binding protein (RbsA), two transmembrane proteins (RbsC) and a solute-binding protein (RbsB).

The protein resides in the cell inner membrane. It carries out the reaction D-ribose(out) + ATP + H2O = D-ribose(in) + ADP + phosphate + H(+). Part of the ABC transporter complex RbsABC involved in ribose import. Responsible for energy coupling to the transport system. In Burkholderia ambifaria (strain ATCC BAA-244 / DSM 16087 / CCUG 44356 / LMG 19182 / AMMD) (Burkholderia cepacia (strain AMMD)), this protein is Ribose import ATP-binding protein RbsA 2.